A 267-amino-acid polypeptide reads, in one-letter code: 4-hydroxy-tetrahydrodipicolinate reductase (267 aa).

Position 11–16 (11–16) interacts with NAD(+); it reads GAAGRM. Arg-39 is a binding site for NADP(+). NAD(+) is bound by residues 100-102 and 126-129; these read GTT and APNF. His-156 (proton donor/acceptor) is an active-site residue. Position 157 (His-157) interacts with (S)-2,3,4,5-tetrahydrodipicolinate. Residue Lys-160 is the Proton donor of the active site. 166-167 is a binding site for (S)-2,3,4,5-tetrahydrodipicolinate; the sequence is GT.

Belongs to the DapB family.

It is found in the cytoplasm. It carries out the reaction (S)-2,3,4,5-tetrahydrodipicolinate + NAD(+) + H2O = (2S,4S)-4-hydroxy-2,3,4,5-tetrahydrodipicolinate + NADH + H(+). The enzyme catalyses (S)-2,3,4,5-tetrahydrodipicolinate + NADP(+) + H2O = (2S,4S)-4-hydroxy-2,3,4,5-tetrahydrodipicolinate + NADPH + H(+). It participates in amino-acid biosynthesis; L-lysine biosynthesis via DAP pathway; (S)-tetrahydrodipicolinate from L-aspartate: step 4/4. In terms of biological role, catalyzes the conversion of 4-hydroxy-tetrahydrodipicolinate (HTPA) to tetrahydrodipicolinate. In Moorella thermoacetica (strain ATCC 39073 / JCM 9320), this protein is 4-hydroxy-tetrahydrodipicolinate reductase.